The chain runs to 102 residues: MNGIPMEHGLLLAAVLFCIGLCGLLIRRNLLFILMSIEIMMNASALAFVVAGSRWAQADGQIMYILVISLAAAEASIGLALLLLLYRRYHTLNVDTVSEMRG.

The next 3 helical transmembrane spans lie at 6-26 (MEHG…GLLI), 30-50 (LLFI…AFVV), and 65-85 (ILVI…LLLL).

The protein belongs to the complex I subunit 4L family. In terms of assembly, NDH-1 is composed of 14 different subunits. Subunits NuoA, H, J, K, L, M, N constitute the membrane sector of the complex.

The protein localises to the cell inner membrane. The catalysed reaction is a quinone + NADH + 5 H(+)(in) = a quinol + NAD(+) + 4 H(+)(out). NDH-1 shuttles electrons from NADH, via FMN and iron-sulfur (Fe-S) centers, to quinones in the respiratory chain. The immediate electron acceptor for the enzyme in this species is believed to be ubiquinone. Couples the redox reaction to proton translocation (for every two electrons transferred, four hydrogen ions are translocated across the cytoplasmic membrane), and thus conserves the redox energy in a proton gradient. This is NADH-quinone oxidoreductase subunit K from Aeromonas hydrophila subsp. hydrophila (strain ATCC 7966 / DSM 30187 / BCRC 13018 / CCUG 14551 / JCM 1027 / KCTC 2358 / NCIMB 9240 / NCTC 8049).